Consider the following 855-residue polypeptide: Photoactivated adenylate cyclase subunit beta-like protein 1224-5/9F (855 aa).

The BLUF 1 domain maps to 56-149 (LRRLMYLSKG…GRMSGVWHMK (94 aa)). The segment at 420 to 444 (RPPIFDDTPKCNPRPRTPGCEGRQR) is disordered. A BLUF 2 domain is found at 471–563 (VPTLTYISHA…RVYPSEWTLT (93 aa)). Basic and acidic residues predominate over residues 813 to 827 (RSGEKPLTEPEEAKL). Residues 813–855 (RSGEKPLTEPEEAKLDFSPGRVRHGDSGRRSNSAQGKLSIQVR) are disordered. A compositionally biased stretch (polar residues) spans 842 to 855 (RSNSAQGKLSIQVR).

As to quaternary structure, heterotetramer of two alpha and two beta subunits.

It is found in the cell projection. The protein resides in the cilium. It localises to the flagellum. The polypeptide is Photoactivated adenylate cyclase subunit beta-like protein 1224-5/9F (Euglena gracilis).